The primary structure comprises 133 residues: Small ribosomal subunit protein uS8 (133 aa).

Belongs to the universal ribosomal protein uS8 family. In terms of assembly, part of the 30S ribosomal subunit. Contacts proteins S5 and S12.

In terms of biological role, one of the primary rRNA binding proteins, it binds directly to 16S rRNA central domain where it helps coordinate assembly of the platform of the 30S subunit. The polypeptide is Small ribosomal subunit protein uS8 (Chlamydia abortus (strain DSM 27085 / S26/3) (Chlamydophila abortus)).